A 462-amino-acid polypeptide reads, in one-letter code: 3-isopropylmalate dehydratase large subunit (462 aa).

3 residues coordinate [4Fe-4S] cluster: Cys-337, Cys-397, and Cys-400.

This sequence belongs to the aconitase/IPM isomerase family. LeuC type 1 subfamily. Heterodimer of LeuC and LeuD. [4Fe-4S] cluster is required as a cofactor.

The enzyme catalyses (2R,3S)-3-isopropylmalate = (2S)-2-isopropylmalate. Its pathway is amino-acid biosynthesis; L-leucine biosynthesis; L-leucine from 3-methyl-2-oxobutanoate: step 2/4. In terms of biological role, catalyzes the isomerization between 2-isopropylmalate and 3-isopropylmalate, via the formation of 2-isopropylmaleate. This Listeria welshimeri serovar 6b (strain ATCC 35897 / DSM 20650 / CCUG 15529 / CIP 8149 / NCTC 11857 / SLCC 5334 / V8) protein is 3-isopropylmalate dehydratase large subunit.